A 314-amino-acid polypeptide reads, in one-letter code: Ribosomal protein L11 methyltransferase (314 aa).

Residues Thr163, Gly184, Asp206, and Asn248 each coordinate S-adenosyl-L-methionine.

The protein belongs to the methyltransferase superfamily. PrmA family.

It localises to the cytoplasm. It carries out the reaction L-lysyl-[protein] + 3 S-adenosyl-L-methionine = N(6),N(6),N(6)-trimethyl-L-lysyl-[protein] + 3 S-adenosyl-L-homocysteine + 3 H(+). Functionally, methylates ribosomal protein L11. This chain is Ribosomal protein L11 methyltransferase, found in Lactobacillus delbrueckii subsp. bulgaricus (strain ATCC 11842 / DSM 20081 / BCRC 10696 / JCM 1002 / NBRC 13953 / NCIMB 11778 / NCTC 12712 / WDCM 00102 / Lb 14).